An 811-amino-acid polypeptide reads, in one-letter code: U-box domain-containing protein 43 (811 aa).

The U-box domain occupies 24–103 (NIYEAFICPL…EEWRARNDAL (80 aa)). 9 ARM repeats span residues 136 to 175 (RKIRQRVCNPQLVRLITDMLKSSSHEVRCKALQTLQVVVE), 178 to 217 (EESKAIVAEGDTVRTIVKFLSQEPSKGREAAVSVLFELSK), 220 to 261 (ALCE…NLER), 263 to 302 (EENVRQMAINGRLQPLLAKLLEGSPETKVSMAFYLGVLAL), 303 to 342 (NNDVKVIVAQTVGSSLIDLMRTRDMSQREAALGALNNISS), 344 to 388 (EGSA…NIVN), 399 to 438 (GPHHQTLVSEEIVENLLQLTSNTGPEIQGKLLAVLVGLTS), 444 to 484 (INVV…NISP), and 489 to 528 (ELANALRSTVGQLGSLVSIISENTPTITEEQAAAAGLLAE).

The enzyme catalyses S-ubiquitinyl-[E2 ubiquitin-conjugating enzyme]-L-cysteine + [acceptor protein]-L-lysine = [E2 ubiquitin-conjugating enzyme]-L-cysteine + N(6)-ubiquitinyl-[acceptor protein]-L-lysine.. The protein operates within protein modification; protein ubiquitination. Functions as an E3 ubiquitin ligase. This chain is U-box domain-containing protein 43 (PUB43), found in Arabidopsis thaliana (Mouse-ear cress).